A 352-amino-acid polypeptide reads, in one-letter code: tRNA pseudouridine synthase D (352 aa).

D81 serves as the catalytic Nucleophile. Residues 157 to 303 (GVPNYFGTQR…MDHERRILRL (147 aa)) enclose the TRUD domain.

The protein belongs to the pseudouridine synthase TruD family.

It catalyses the reaction uridine(13) in tRNA = pseudouridine(13) in tRNA. Its function is as follows. Responsible for synthesis of pseudouridine from uracil-13 in transfer RNAs. The chain is tRNA pseudouridine synthase D from Pseudomonas putida (strain ATCC 47054 / DSM 6125 / CFBP 8728 / NCIMB 11950 / KT2440).